The following is a 341-amino-acid chain: Alpha-1,4-N-acetylglucosaminyltransferase (341 aa).

The Cytoplasmic segment spans residues 1-4; that stretch reads MLKE. Residues 5–25 form a helical; Signal-anchor for type II membrane protein membrane-spanning segment; sequence IYLSLSLVLVFACGLLYQLTM. The Lumenal segment spans residues 26-341; that stretch reads RSQCFFACLP…VSKKPGTGSR (316 aa). N-linked (GlcNAc...) asparagine glycosylation is present at asparagine 100. Positions 168–170 match the DXD motif motif; the sequence is DTD.

This sequence belongs to the glycosyltransferase 32 family.

The protein resides in the golgi apparatus membrane. It participates in protein modification; protein glycosylation. Catalyzes the transfer of N-acetylglucosamine (GlcNAc) to core 2 branched O-glycans. Necessary for the synthesis of type III mucin which is specifically produced in the stomach, duodenum, and pancreatic duct. May protect against inflammation-associated gastric adenocarcinoma. This is Alpha-1,4-N-acetylglucosaminyltransferase from Mus musculus (Mouse).